The chain runs to 480 residues: Caspase-8 (480 aa).

Residues 1-218 (MDFQSCLYAI…ELCDSPREQD (218 aa)) constitute a propeptide that is removed on maturation. 2 DED domains span residues 3-80 (FQSC…NFLD) and 101-177 (YRVM…KIED). Residues Ser188 and Ser213 each carry the phosphoserine modification. Lys226 is modified (N6-acetyllysine). The active site involves His319. Tyr336 carries the phosphotyrosine modification. The active site involves Cys362. A propeptide spanning residues 377–387 (FEQQNHTLEVD) is cleaved from the precursor. Phosphoserine; by CDK1 is present on Ser389.

Belongs to the peptidase C14A family. As to quaternary structure, heterotetramer that consists of two anti-parallel arranged heterodimers, each one formed by a 18 kDa (p18) and a 10 kDa (p10) subunit. Component of the death-induced signaling complex (DISC) composed of cell surface receptor FAS/CD95 or TNFRSF1A, adapter protein FADD and the CASP8 protease; recruitment of CASP8 to the complex is required for processing of CASP8 into the p18 and p10 subunits. Component of the AIM2 PANoptosome complex, a multiprotein complex that drives inflammatory cell death (PANoptosis). Interacts with CFLAR and PEA15. Interacts with RFFL and RNF34; negatively regulate CASP8 through proteasomal degradation. Interacts with TNFAIP8L2. Interacts with CASP8AP2. Interacts with NOL3; decreases CASP8 activity in a mitochondria localization- and phosphorylation-dependent manner and this interaction is dissociated by calcium. Interacts with UBR2. Interacts with RIPK1. Interacts with stimulated TNFRSF10B; this interaction is followed by CASP8 proteolytic cleavage and activation. Generation of the subunits requires association with the death-inducing signaling complex (DISC), whereas additional processing is likely due to the autocatalytic activity of the activated protease. GZMB and CASP10 can be involved in these processing events. Post-translationally, (Microbial infection) Proteolytically cleaved by the cowpox virus CRMA death inhibitory protein. In terms of processing, phosphorylation on Ser-389 during mitosis by CDK1 inhibits activation by proteolysis and prevents apoptosis. This phosphorylation occurs in cancer cell lines, as well as in primary breast tissues and lymphocytes. Expressed in a wide variety of tissues. Highest expression in spleen, thymus, lung, liver and kidney. Lower expression in heart, brain, testis and skeletal muscle.

It is found in the cytoplasm. The protein localises to the nucleus. The enzyme catalyses Strict requirement for Asp at position P1 and has a preferred cleavage sequence of (Leu/Asp/Val)-Glu-Thr-Asp-|-(Gly/Ser/Ala).. With respect to regulation, CASP8 activity is restricted by RIPK1. (Microbial infection) Inhibited by baculovirus p35 protein P35. Thiol protease that plays a key role in programmed cell death by acting as a molecular switch for apoptosis, necroptosis and pyroptosis, and is required to prevent tissue damage during embryonic development and adulthood. Initiator protease that induces extrinsic apoptosis by mediating cleavage and activation of effector caspases responsible for FAS/CD95-mediated and TNFRSF1A-induced cell death. Cleaves and activates effector caspases CASP3, CASP4, CASP6, CASP7, CASP9 and CASP10. Binding to the adapter molecule FADD recruits it to either receptor FAS/CD95 or TNFRSF1A. The resulting aggregate called the death-inducing signaling complex (DISC) performs CASP8 proteolytic activation. The active dimeric enzyme is then liberated from the DISC and free to activate downstream apoptotic proteases. Proteolytic fragments of the N-terminal propeptide (termed CAP3, CAP5 and CAP6) are likely retained in the DISC. In addition to extrinsic apoptosis, also acts as a negative regulator of necroptosis: acts by cleaving RIPK1 at 'Asp-325', which is crucial to inhibit RIPK1 kinase activity, limiting TNF-induced apoptosis, necroptosis and inflammatory response. Also able to initiate pyroptosis by mediating cleavage and activation of gasdermin-C and -D (GSDMC and GSDMD, respectively): gasdermin cleavage promotes release of the N-terminal moiety that binds to membranes and forms pores, triggering pyroptosis. Initiates pyroptosis following inactivation of MAP3K7/TAK1. Also acts as a regulator of innate immunity by mediating cleavage and inactivation of N4BP1 downstream of TLR3 or TLR4, thereby promoting cytokine production. May participate in the Granzyme B (GZMB) cell death pathways. Cleaves PARP1 and PARP2. This is Caspase-8 from Mus musculus (Mouse).